A 475-amino-acid polypeptide reads, in one-letter code: Aspartyl/glutamyl-tRNA(Asn/Gln) amidotransferase subunit B (475 aa).

The protein belongs to the GatB/GatE family. GatB subfamily. Heterotrimer of A, B and C subunits.

It carries out the reaction L-glutamyl-tRNA(Gln) + L-glutamine + ATP + H2O = L-glutaminyl-tRNA(Gln) + L-glutamate + ADP + phosphate + H(+). The enzyme catalyses L-aspartyl-tRNA(Asn) + L-glutamine + ATP + H2O = L-asparaginyl-tRNA(Asn) + L-glutamate + ADP + phosphate + 2 H(+). Its function is as follows. Allows the formation of correctly charged Asn-tRNA(Asn) or Gln-tRNA(Gln) through the transamidation of misacylated Asp-tRNA(Asn) or Glu-tRNA(Gln) in organisms which lack either or both of asparaginyl-tRNA or glutaminyl-tRNA synthetases. The reaction takes place in the presence of glutamine and ATP through an activated phospho-Asp-tRNA(Asn) or phospho-Glu-tRNA(Gln). This chain is Aspartyl/glutamyl-tRNA(Asn/Gln) amidotransferase subunit B, found in Pelodictyon phaeoclathratiforme (strain DSM 5477 / BU-1).